The sequence spans 107 residues: Circadian clock oscillator protein KaiB (107 aa).

Belongs to the KaiB family. In terms of assembly, may undergo a major conformational rearrangment; in the free state forms homooligomers. When bound to KaiC switches to a monomeric thioredoxin-fold (KaiB(fs)). The active oscillator complex is probably KaiC(6):KaiB(6).

Its function is as follows. Component of the KaiBC clock protein complex, which constitutes the main circadian regulator in cyanobacteria; it may modify the ATPase activity of KaiC. In terms of biological role, may be a metamorphic protein which reversibly switches between an inactive tetrameric fold and a rare, thioredoxin-like monomeric fold (KaiB(fs)). KaiB(fs) binds phospho-KaiC, and perhaps clock output effectors. This chain is Circadian clock oscillator protein KaiB, found in Prochlorococcus marinus (strain NATL2A).